The chain runs to 140 residues: Profilin-1 (140 aa).

Residue Ala-2 is modified to N-acetylalanine. Ser-28 is subject to Phosphoserine. Lys-54 is covalently cross-linked (Glycyl lysine isopeptide (Lys-Gly) (interchain with G-Cter in SUMO2); alternate). Lys-54 participates in a covalent cross-link: Glycyl lysine isopeptide (Lys-Gly) (interchain with G-Cter in ubiquitin); alternate. Phosphoserine occurs at positions 57 and 85. 2 positions are modified to N6-acetyllysine: Lys-105 and Lys-108. Position 129 is a phosphotyrosine (Tyr-129). Position 138 is a phosphoserine; by ROCK1 (Ser-138).

The protein belongs to the profilin family. In terms of assembly, found in a complex with XPO6, Ran, ACTB and PFN1. Interacts with ACTB. Interacts with VASP. Interacts with HTT. Interacts with SH3BGRL. Occurs in many kinds of cells as a complex with monomeric actin in a 1:1 ratio. Interacts with ACTMAP. Phosphorylation at Ser-138 reduces its affinity for G-actin and blocks its interaction with HTT, reducing its ability to inhibit androgen receptor (AR) and HTT aggregation. As to expression, expressed in epididymis (at protein level).

The protein resides in the cytoplasm. Its subcellular location is the cytoskeleton. Its function is as follows. Binds to actin and affects the structure of the cytoskeleton. At high concentrations, profilin prevents the polymerization of actin, whereas it enhances it at low concentrations. By binding to PIP2, it inhibits the formation of IP3 and DG. Inhibits androgen receptor (AR) and HTT aggregation and binding of G-actin is essential for its inhibition of AR. The polypeptide is Profilin-1 (PFN1) (Homo sapiens (Human)).